The chain runs to 584 residues: Vesicular glutamate transporter 2.1 (584 aa).

The Cytoplasmic portion of the chain corresponds to 1–70 (METPREPAGF…CTCFGLPRRY (70 aa)). A helical membrane pass occupies residues 71-91 (IIAIMSGLGFCISFGIRCNLG). The Vesicular portion of the chain corresponds to 92-124 (VAIVSMVNNSTIHLNGKIIIKEKAKFNWDPETV). Asn99 and Asn100 each carry an N-linked (GlcNAc...) asparagine glycan. The helical transmembrane segment at 125–145 (GLIHGSFFWGYIVTQIPGGYI) threads the bilayer. The Cytoplasmic segment spans residues 146-148 (SSR). Residues 149–169 (LAANRVFGAAILLTSTLNMFI) traverse the membrane as a helical segment. Residues 170 to 177 (PSAARGHY) are Vesicular-facing. A helical transmembrane segment spans residues 178–198 (GCVIFVRILQGLVEGVTYPAC). The Cytoplasmic segment spans residues 199–216 (HGIWSKWAPPLERSRLAT). Residues 217 to 237 (TSFCGSYAGAVIAMPLAGILV) traverse the membrane as a helical segment. The Vesicular portion of the chain corresponds to 238 to 244 (QYTGWSS). A helical transmembrane segment spans residues 245-265 (VFYVYGCFGIFWYMFWILVSY). The Cytoplasmic portion of the chain corresponds to 266 to 310 (ESPAEHPTITAEERCYIEESIGESAKLLGPADKFKTPWRKFFTSM). The chain crosses the membrane as a helical span at residues 311 to 331 (PVYAIIVANFCRSWTFYLLLI). Residues 332–349 (SQPAYFEEVFGFEISKVG) are Vesicular-facing. The chain crosses the membrane as a helical span at residues 350 to 370 (MLSALPHLVMTIIVPIGGQLA). Residues 371-386 (DHLRSKNILSTTTVRK) lie on the Cytoplasmic side of the membrane. A helical transmembrane segment spans residues 387-407 (IMNCGGFGMEATLLLIVGYSH). At 408–409 (SK) the chain is on the vesicular side. A helical transmembrane segment spans residues 410 to 430 (GVAISFLVLAVGFSGFAISGF). Over 431-445 (NVNHLDIAPRYASIL) the chain is Cytoplasmic. The helical transmembrane segment at 446–466 (MGISNGVGTLSGMVCPLIVGA) threads the bilayer. Over 467–477 (MTKHKTREEWQ) the chain is Vesicular. Residues 478–498 (YVFLIASLVHYGGVIFYGIFA) traverse the membrane as a helical segment. Topologically, residues 499–584 (SGEKQPWADP…YGYRQGGNYS (86 aa)) are cytoplasmic.

This sequence belongs to the major facilitator superfamily. Sodium/anion cotransporter family. VGLUT subfamily. As to expression, expressed in spinal cord and retinal ganglion cells.

The protein resides in the cytoplasmic vesicle. Its subcellular location is the secretory vesicle. It localises to the synaptic vesicle membrane. It is found in the membrane. The protein localises to the synapse. The protein resides in the synaptosome. Its subcellular location is the cell membrane. The catalysed reaction is L-glutamate(out) = L-glutamate(in). It catalyses the reaction 3 Na(+)(out) + phosphate(out) = 3 Na(+)(in) + phosphate(in). The enzyme catalyses phosphate(in) = phosphate(out). It carries out the reaction K(+)(in) + H(+)(out) = K(+)(out) + H(+)(in). The catalysed reaction is chloride(in) = chloride(out). Its activity is regulated as follows. Chloride channel activity is allosterically activated by lumenal H(+) and Cl(-) leading to synaptic vesicles acidification. The L-glutamate transport activity is allosterically activated by lumenal H(+) and Cl(-). The allosteric requirement for H(+) efficiently prevents non-vesicular efflux across the plasma membrane. The L-glutamate uniporter activity exhibits a biphasic dependence on chloride concentration. Its function is as follows. Multifunctional transporter that transports L-glutamate as well as multiple ions such as chloride, proton, potassium, sodium and phosphate. At the synaptic vesicle membrane, mainly functions as a uniporter which transports preferentially L-glutamate but also, phosphate from the cytoplasm into synaptic vesicles at presynaptic nerve terminals of excitatory neural cells. The L-glutamate or phosphate uniporter activity is electrogenic and is driven by the proton electrochemical gradient, mainly by the electrical gradient established by the vacuolar H(+)-ATPase across the synaptic vesicle membrane. In addition, functions as a chloride channel that allows a chloride permeation through the synaptic vesicle membrane therefore affects the proton electrochemical gradient and promotes synaptic vesicles acidification. Moreover, functions as a vesicular K(+)/H(+) antiport allowing to maintain the electrical gradient and to decrease chemical gradient and therefore sustain vesicular L-glutamate uptake. The vesicular H(+)/H(+) antiport activity is electroneutral. At the plasma membrane, following exocytosis, functions as a symporter of Na(+) and phosphate from the extracellular space to the cytoplasm allowing synaptic phosphate homeostasis regulation. The symporter activity is driven by an inside negative membrane potential and is electrogenic. Also involved in the regulation of retinal hyaloid vessel regression during postnatal development. May also play a role in the endocrine L-glutamatergic system of other tissues such as pineal gland and pancreas. Required for glutamate release by retinotectal synapses and visual acuity. The sequence is that of Vesicular glutamate transporter 2.1 (slc17a6b) from Danio rerio (Zebrafish).